Consider the following 600-residue polypeptide: Sulfite reductase [NADPH] flavoprotein alpha-component (600 aa).

The 139-residue stretch at 63–201 (ITLISASQTG…VADQWRKQLT (139 aa)) folds into the Flavodoxin-like domain. FMN-binding positions include 69–74 (SQTGNA), 116–119 (STQG), and 152–161 (LGDTSYERFC). Positions 235 to 449 (QAPLTAALAT…IEHNDNFRLP (215 aa)) constitute an FAD-binding FR-type domain. FAD contacts are provided by residues Thr-323, His-357, 387-390 (RLYS), 405-407 (TVG), Tyr-411, and 420-423 (GGAS). NADP(+) is bound by residues 520-521 (SR), 526-530 (KIYVQ), and Asp-562. FAD is bound at residue Tyr-600.

It belongs to the NADPH-dependent sulphite reductase flavoprotein subunit CysJ family. This sequence in the N-terminal section; belongs to the flavodoxin family. In the C-terminal section; belongs to the flavoprotein pyridine nucleotide cytochrome reductase family. As to quaternary structure, alpha(8)-beta(8). The alpha component is a flavoprotein, the beta component is a hemoprotein. FAD is required as a cofactor. It depends on FMN as a cofactor.

It catalyses the reaction hydrogen sulfide + 3 NADP(+) + 3 H2O = sulfite + 3 NADPH + 4 H(+). It functions in the pathway sulfur metabolism; hydrogen sulfide biosynthesis; hydrogen sulfide from sulfite (NADPH route): step 1/1. Its function is as follows. Component of the sulfite reductase complex that catalyzes the 6-electron reduction of sulfite to sulfide. This is one of several activities required for the biosynthesis of L-cysteine from sulfate. The flavoprotein component catalyzes the electron flow from NADPH -&gt; FAD -&gt; FMN to the hemoprotein component. This is Sulfite reductase [NADPH] flavoprotein alpha-component from Photorhabdus laumondii subsp. laumondii (strain DSM 15139 / CIP 105565 / TT01) (Photorhabdus luminescens subsp. laumondii).